The primary structure comprises 245 residues: Adapter protein MecA (245 aa).

The protein belongs to the MecA family. In terms of assembly, homodimer.

In terms of biological role, enables the recognition and targeting of unfolded and aggregated proteins to the ClpC protease or to other proteins involved in proteolysis. This is Adapter protein MecA from Streptococcus pneumoniae serotype 19F (strain G54).